Consider the following 717-residue polypeptide: DNA-directed RNA polymerase subunit beta' (717 aa).

The Zn(2+) site is built by Cys71, Cys73, Cys91, and Cys94. Mg(2+) contacts are provided by Asp481, Asp483, and Asp485.

This sequence belongs to the RNA polymerase beta' chain family. RpoC1 subfamily. In terms of assembly, in plastids the minimal PEP RNA polymerase catalytic core is composed of four subunits: alpha, beta, beta', and beta''. When a (nuclear-encoded) sigma factor is associated with the core the holoenzyme is formed, which can initiate transcription. Mg(2+) serves as cofactor. The cofactor is Zn(2+).

The protein resides in the plastid. Its subcellular location is the chloroplast. The catalysed reaction is RNA(n) + a ribonucleoside 5'-triphosphate = RNA(n+1) + diphosphate. DNA-dependent RNA polymerase catalyzes the transcription of DNA into RNA using the four ribonucleoside triphosphates as substrates. The chain is DNA-directed RNA polymerase subunit beta' from Chlorokybus atmophyticus (Soil alga).